The chain runs to 304 residues: Capsid protein (304 aa).

Basic and acidic residues-rich tracts occupy residues 1–24 and 32–54; these read MGDS…REAR and FEGK…EMSL. The disordered stretch occupies residues 1–54; it reads MGDSTKKAETAKDEGTSQERREARPLPTAADFEGKDTSENTDGRAADADGEMSL.

Belongs to the potexviruses coat protein family.

It is found in the virion. Functionally, required for genome encapsidation. Forms ribonucleoprotein complexes along with TGB1 helicase and viral RNA. The chain is Capsid protein from Potato virus M (strain Russian) (PVM).